Reading from the N-terminus, the 462-residue chain is uncharacterized protein (462 aa).

A disordered region spans residues 1 to 108; that stretch reads MEDSNTNKDI…NGQDDQDEMD (108 aa). Residues 36–51 show a composition bias toward basic and acidic residues; the sequence is TVERILERKQKERESK. The span at 64 to 95 shows a compositional bias: low complexity; that stretch reads SSPSSLLSSPISSNDNNNNNNNNNNESFDINN. A coiled-coil region spans residues 119–150; sequence LLKRKAALAAKKKESLAEQMKKYNQQYDSIIS. The interval 188 to 208 is disordered; that stretch reads SKLQSLNNNTSPSTSSSNLID. Positions 190 to 208 are enriched in low complexity; it reads LQSLNNNTSPSTSSSNLID.

This is an uncharacterized protein from Dictyostelium discoideum (Social amoeba).